The chain runs to 1567 residues: ABC multidrug transporter MDR1 (1567 aa).

Pro residues predominate over residues 1-11 (MASQPPQPPSG). The disordered stretch occupies residues 1–37 (MASQPPQPPSGQPDTQYEEYQSEVITETTNRPTPAAD). The segment covering 22-32 (SEVITETTNRP) has biased composition (polar residues). N-linked (GlcNAc...) asparagine glycans are attached at residues N149, N157, and N356. An ABC transporter 1 domain is found at 167–432 (VQYQDTFLSP…FEEMGWYCPP (266 aa)). The next 6 helical transmembrane spans lie at 543–563 (STIATNISQIMMALIIGSLFF), 571–591 (GFFAKGSVIFFAILLNGLMSI), 636–656 (IPIKFLLALVFNIIIYFLGGL), 661–681 (AKFFIFFLFTFITILTMSAIF), 691–711 (IPQALALAGVMILALVIYTGF), and 798–818 (LGILLGFLAFFYFVYLVVSEL). N-linked (GlcNAc...) asparagine glycans are attached at residues N819, N895, and N912. In terms of domain architecture, ABC transporter 2 spans 891 to 1134 (FTWRNVTYDI…LLNYFETHGA (244 aa)). 927–934 (GVSGAGKT) serves as a coordination point for ATP. Residues 1172 to 1202 (ESRHVQQELDRIQSETSKRNEGHGQSAEKEP) are disordered. The helical transmembrane segment at 1231–1251 (IWGKLLLGLTSALFIGFSFFL) threads the bilayer. An N-linked (GlcNAc...) asparagine glycan is attached at N1253. Transmembrane regions (helical) follow at residues 1257-1277 (AGLQNSLFSIFMLTTIFSSLV), 1305-1325 (VFLLANIIVEIPYQILLGIIA), 1345-1365 (ILLLYCVQFFIFASTFAQMII), 1372-1392 (ETAGGIATTMFGLMVTFNGVL), and 1498-1518 (GIGWAYIVFNIFATVALYYLI).

The protein belongs to the ABC transporter superfamily. ABCG family. PDR (TC 3.A.1.205) subfamily.

The protein localises to the cell membrane. It carries out the reaction voriconazole(in) + ATP + H2O = voriconazole(out) + ADP + phosphate + H(+). The enzyme catalyses fluconazole(in) + ATP + H2O = fluconazole(out) + ADP + phosphate + H(+). It catalyses the reaction (R)-miconazole(in) + ATP + H2O = (R)-miconazole(out) + ADP + phosphate + H(+). The catalysed reaction is (S)-miconazole(in) + ATP + H2O = (S)-miconazole(out) + ADP + phosphate + H(+). Functionally, pleiotropic ABC efflux transporter that may be involved in the modulation susceptibility to a wide range of unrelated cytotoxic compounds. The protein is ABC multidrug transporter MDR1 of Trichophyton tonsurans (strain CBS 112818) (Scalp ringworm fungus).